The chain runs to 1741 residues: DNA-directed RNA polymerase III subunit RPC1 (1741 aa).

Residues cysteine 79, cysteine 82, cysteine 89, histidine 92, cysteine 119, cysteine 122, and cysteine 160 each coordinate Zn(2+). Residues aspartate 722, aspartate 724, and aspartate 726 each coordinate Mg(2+). The bridging helix stretch occupies residues 1099-1111 (PFEFLAHARAGRD). The segment at 1719–1741 (RHANKRSWSRGKERHASLKPKNR) is disordered.

Belongs to the RNA polymerase beta' chain family. Component of the RNA polymerase III (Pol III) complex consisting of 17 subunits.

It is found in the nucleus. The catalysed reaction is RNA(n) + a ribonucleoside 5'-triphosphate = RNA(n+1) + diphosphate. Functionally, DNA-dependent RNA polymerase catalyzes the transcription of DNA into RNA using the four ribonucleoside triphosphates as substrates. Largest and catalytic core component of RNA polymerase III which synthesizes small RNAs, such as 5S rRNA and tRNAs. Forms the polymerase active center together with the second largest subunit. A single-stranded DNA template strand of the promoter is positioned within the central active site cleft of Pol III. A bridging helix emanates from RPC1 and crosses the cleft near the catalytic site and is thought to promote translocation of Pol III by acting as a ratchet that moves the RNA-DNA hybrid through the active site by switching from straight to bent conformations at each step of nucleotide addition. The sequence is that of DNA-directed RNA polymerase III subunit RPC1 (RPOA3) from Giardia intestinalis (Giardia lamblia).